We begin with the raw amino-acid sequence, 125 residues long: Large ribosomal subunit protein bL19 (125 aa).

The protein belongs to the bacterial ribosomal protein bL19 family.

This protein is located at the 30S-50S ribosomal subunit interface and may play a role in the structure and function of the aminoacyl-tRNA binding site. The sequence is that of Large ribosomal subunit protein bL19 from Ehrlichia ruminantium (strain Gardel).